The following is a 1210-amino-acid chain: DNA-directed RNA polymerase II subunit RPB2 (1210 aa).

A Mg(2+)-binding site is contributed by Asp826. Zn(2+) is bound by residues Cys1152, Cys1155, Cys1170, and Cys1173. The C4-type zinc-finger motif lies at 1152 to 1173; sequence CDICGLIAIASYKKDSYECRSC.

The protein belongs to the RNA polymerase beta chain family. As to quaternary structure, component of the RNA polymerase II (Pol II) complex consisting of 12 subunits.

It is found in the nucleus. The enzyme catalyses RNA(n) + a ribonucleoside 5'-triphosphate = RNA(n+1) + diphosphate. In terms of biological role, DNA-dependent RNA polymerase catalyzes the transcription of DNA into RNA using the four ribonucleoside triphosphates as substrates. Second largest component of RNA polymerase II which synthesizes mRNA precursors and many functional non-coding RNAs. Proposed to contribute to the polymerase catalytic activity and forms the polymerase active center together with the largest subunit. Pol II is the central component of the basal RNA polymerase II transcription machinery. It is composed of mobile elements that move relative to each other. RPB2 is part of the core element with the central large cleft, the clamp element that moves to open and close the cleft and the jaws that are thought to grab the incoming DNA template. The sequence is that of DNA-directed RNA polymerase II subunit RPB2 (rpb2) from Schizosaccharomyces pombe (strain 972 / ATCC 24843) (Fission yeast).